The sequence spans 686 residues: ATP-dependent zinc metalloprotease FTSH 6, chloroplastic (686 aa).

Over residues 1–14 (MSPTAMSLTTTTSR) the composition is skewed to polar residues. A disordered region spans residues 1–52 (MSPTAMSLTTTTSRLPICRAQGGGVAKEKRTTPPPAKITPPSSSSSEAAGLS). Residues 1 to 75 (MSPTAMSLTT…LGLTAARPAR (75 aa)) constitute a chloroplast transit peptide. A compositionally biased stretch (low complexity) spans 39 to 52 (TPPSSSSSEAAGLS). A helical transmembrane segment spans residues 164 to 184 (VMLLDLLVNFGFPLLFVASLL). 261–268 (GPPGTGKT) contacts ATP. H483 lines the Zn(2+) pocket. Residue E484 is part of the active site. Zn(2+)-binding residues include H487 and D562.

The protein in the N-terminal section; belongs to the AAA ATPase family. In the C-terminal section; belongs to the peptidase M41 family. Zn(2+) is required as a cofactor.

Its subcellular location is the plastid. It is found in the chloroplast thylakoid membrane. Probable ATP-dependent zinc metallopeptidase. This Oryza sativa subsp. japonica (Rice) protein is ATP-dependent zinc metalloprotease FTSH 6, chloroplastic (FTSH6).